The following is a 673-amino-acid chain: Probable potassium transport system protein Kup 1 (673 aa).

The next 13 helical transmembrane spans lie at 14–34 (GAGF…SPLY), 58–78 (LSLI…WIAL), 101–121 (WLII…ALTP), 147–167 (LPIV…QRFG), 175–195 (FGPV…INLF), 196–216 (GDFS…LLSP), 220–240 (AGIF…ALYS), 252–272 (VSWP…AAWL), 294–314 (LIIF…QALI), 345–365 (LYIP…VVYF), 374–394 (AYGL…TVYL), 403–423 (VFVV…FAAS), and 427–447 (FLHG…VMAI).

This sequence belongs to the HAK/KUP transporter (TC 2.A.72) family.

It localises to the cell membrane. It catalyses the reaction K(+)(in) + H(+)(in) = K(+)(out) + H(+)(out). Its function is as follows. Transport of potassium into the cell. Likely operates as a K(+):H(+) symporter. The protein is Probable potassium transport system protein Kup 1 of Lactococcus lactis subsp. cremoris (strain SK11).